The sequence spans 173 residues: Flavodoxin 2 (173 aa).

Residues 3–165 (MGLFYGSSTC…RIQSWCEQIL (163 aa)) form the Flavodoxin-like domain.

This sequence belongs to the flavodoxin family. It depends on FMN as a cofactor.

In terms of biological role, low-potential electron donor to a number of redox enzymes. This Escherichia coli O157:H7 protein is Flavodoxin 2 (fldB).